Reading from the N-terminus, the 134-residue chain is Small ribosomal subunit protein uS11 (134 aa).

The disordered stretch occupies residues 114 to 134; it reads SISDVTPQPHNGCRPPKRRRV.

It belongs to the universal ribosomal protein uS11 family. Part of the 30S ribosomal subunit. Interacts with proteins S7 and S18. Binds to IF-3.

Functionally, located on the platform of the 30S subunit, it bridges several disparate RNA helices of the 16S rRNA. Forms part of the Shine-Dalgarno cleft in the 70S ribosome. This is Small ribosomal subunit protein uS11 from Corynebacterium efficiens (strain DSM 44549 / YS-314 / AJ 12310 / JCM 11189 / NBRC 100395).